A 246-amino-acid polypeptide reads, in one-letter code: Putative protein phosphatase 2C-type (246 aa).

One can recognise a PPM-type phosphatase domain in the interval 2–240; the sequence is KISLKTDIGQ…DNITIALVHN (239 aa). Mn(2+)-binding residues include aspartate 36, glycine 37, aspartate 192, and aspartate 231.

Requires Mg(2+) as cofactor. Mn(2+) is required as a cofactor.

The enzyme catalyses O-phospho-L-seryl-[protein] + H2O = L-seryl-[protein] + phosphate. The catalysed reaction is O-phospho-L-threonyl-[protein] + H2O = L-threonyl-[protein] + phosphate. This is Putative protein phosphatase 2C-type from Streptococcus pyogenes serotype M6 (strain ATCC BAA-946 / MGAS10394).